Reading from the N-terminus, the 357-residue chain is Peptide chain release factor 1 (357 aa).

Gln234 is modified (N5-methylglutamine).

This sequence belongs to the prokaryotic/mitochondrial release factor family. In terms of processing, methylated by PrmC. Methylation increases the termination efficiency of RF1.

The protein resides in the cytoplasm. Functionally, peptide chain release factor 1 directs the termination of translation in response to the peptide chain termination codons UAG and UAA. This chain is Peptide chain release factor 1, found in Arthrobacter sp. (strain FB24).